Consider the following 568-residue polypeptide: 2-succinyl-5-enolpyruvyl-6-hydroxy-3-cyclohexene-1-carboxylate synthase (568 aa).

This sequence belongs to the TPP enzyme family. MenD subfamily. As to quaternary structure, homodimer. Mg(2+) serves as cofactor. The cofactor is Mn(2+). It depends on thiamine diphosphate as a cofactor.

The enzyme catalyses isochorismate + 2-oxoglutarate + H(+) = 5-enolpyruvoyl-6-hydroxy-2-succinyl-cyclohex-3-ene-1-carboxylate + CO2. Its pathway is quinol/quinone metabolism; 1,4-dihydroxy-2-naphthoate biosynthesis; 1,4-dihydroxy-2-naphthoate from chorismate: step 2/7. The protein operates within quinol/quinone metabolism; menaquinone biosynthesis. Functionally, catalyzes the thiamine diphosphate-dependent decarboxylation of 2-oxoglutarate and the subsequent addition of the resulting succinic semialdehyde-thiamine pyrophosphate anion to isochorismate to yield 2-succinyl-5-enolpyruvyl-6-hydroxy-3-cyclohexene-1-carboxylate (SEPHCHC). The polypeptide is 2-succinyl-5-enolpyruvyl-6-hydroxy-3-cyclohexene-1-carboxylate synthase (Actinobacillus pleuropneumoniae serotype 7 (strain AP76)).